The chain runs to 81 residues: uncharacterized protein (81 aa).

The disordered stretch occupies residues 11–34 (GSVSSSNKVSVANGSSSSSFGSNG).

This is an uncharacterized protein from Dictyostelium discoideum (Social amoeba).